The chain runs to 130 residues: Small ribosomal subunit protein uS8 (130 aa).

It belongs to the universal ribosomal protein uS8 family. Part of the 30S ribosomal subunit.

In terms of biological role, one of the primary rRNA binding proteins, it binds directly to 16S rRNA central domain where it helps coordinate assembly of the platform of the 30S subunit. The protein is Small ribosomal subunit protein uS8 of Methanococcus maripaludis (strain C6 / ATCC BAA-1332).